We begin with the raw amino-acid sequence, 386 residues long: MGPTISIGEALDRYDIDNARYAGSLQTDISAWLRLRNDDSQIIILHPDHRPPVKYEQDIFETESLVPAMNAARGVKDSYEIELIRKANIVSGLAHTAVLEKIGQMTNESDIAGLFLETCMTHGAPEQAYGIIAASGENGATLHYMKNNEDFGSRLSVCLDAGAEYECYASDVTRTFPISSTGEWPTTEARDIYLAVERMQEECIRMIKPGVRFRDVHIHASVVAVEELLKLGVFKEGNSVDEIMASGAVSVFFPHGLGHHVGLEVHDVSEQSVMAATDDMSPRMRARGFLMQPASMMSAALLEANMIVTVEPGIYFNRLALKNARTLPIARFIDFDVVERYYAIGGVRIEDDILVTTDGYENLTTAPKGDAALAIIRKSSVKNSRS.

The Mn(2+) site is built by Asp160, Asp171, Glu311, and Glu350.

It belongs to the peptidase M24B family. Mn(2+) serves as cofactor.

The catalysed reaction is Release of any N-terminal amino acid, including proline, that is linked to proline, even from a dipeptide or tripeptide.. Its function is as follows. Catalyzes the removal of a penultimate prolyl residue from the N-termini of peptides. The sequence is that of Probable Xaa-Pro aminopeptidase PMAA_074180 from Talaromyces marneffei (strain ATCC 18224 / CBS 334.59 / QM 7333) (Penicillium marneffei).